Reading from the N-terminus, the 271-residue chain is tRNA pseudouridine synthase A (271 aa).

Asp-52 acts as the Nucleophile in catalysis. Tyr-110 contacts substrate.

This sequence belongs to the tRNA pseudouridine synthase TruA family. In terms of assembly, homodimer.

It carries out the reaction uridine(38/39/40) in tRNA = pseudouridine(38/39/40) in tRNA. Its function is as follows. Formation of pseudouridine at positions 38, 39 and 40 in the anticodon stem and loop of transfer RNAs. The chain is tRNA pseudouridine synthase A from Maridesulfovibrio salexigens (strain ATCC 14822 / DSM 2638 / NCIMB 8403 / VKM B-1763) (Desulfovibrio salexigens).